The following is a 420-amino-acid chain: 3-phosphoshikimate 1-carboxyvinyltransferase (420 aa).

3-phosphoshikimate-binding residues include Lys-20, Ser-21, and Arg-25. Lys-20 lines the phosphoenolpyruvate pocket. The phosphoenolpyruvate site is built by Gly-90 and Arg-118. Positions 159, 160, 161, 187, 303, and 330 each coordinate 3-phosphoshikimate. Gln-161 is a phosphoenolpyruvate binding site. Asp-303 (proton acceptor) is an active-site residue. 3 residues coordinate phosphoenolpyruvate: Arg-334, Arg-376, and Lys-402.

The protein belongs to the EPSP synthase family. As to quaternary structure, monomer.

The protein localises to the cytoplasm. The enzyme catalyses 3-phosphoshikimate + phosphoenolpyruvate = 5-O-(1-carboxyvinyl)-3-phosphoshikimate + phosphate. Its pathway is metabolic intermediate biosynthesis; chorismate biosynthesis; chorismate from D-erythrose 4-phosphate and phosphoenolpyruvate: step 6/7. In terms of biological role, catalyzes the transfer of the enolpyruvyl moiety of phosphoenolpyruvate (PEP) to the 5-hydroxyl of shikimate-3-phosphate (S3P) to produce enolpyruvyl shikimate-3-phosphate and inorganic phosphate. In Brachyspira hyodysenteriae (strain ATCC 49526 / WA1), this protein is 3-phosphoshikimate 1-carboxyvinyltransferase.